The chain runs to 648 residues: Acetyl-coenzyme A synthetase (648 aa).

Residues 190–193 (RGGK), Thr308, and Asn332 contribute to the CoA site. Residues 384-386 (GEP), 408-413 (DTWWQT), Asp497, and Arg512 each bind ATP. A CoA-binding site is contributed by Ser520. Arg523 provides a ligand contact to ATP. Residues Val534, His536, and Val539 each contribute to the Mg(2+) site. Position 581 (Arg581) interacts with CoA. Lys606 carries the post-translational modification N6-acetyllysine.

This sequence belongs to the ATP-dependent AMP-binding enzyme family. Mg(2+) serves as cofactor. Acetylated. Deacetylation by the SIR2-homolog deacetylase activates the enzyme.

It carries out the reaction acetate + ATP + CoA = acetyl-CoA + AMP + diphosphate. Its function is as follows. Catalyzes the conversion of acetate into acetyl-CoA (AcCoA), an essential intermediate at the junction of anabolic and catabolic pathways. AcsA undergoes a two-step reaction. In the first half reaction, AcsA combines acetate with ATP to form acetyl-adenylate (AcAMP) intermediate. In the second half reaction, it can then transfer the acetyl group from AcAMP to the sulfhydryl group of CoA, forming the product AcCoA. The sequence is that of Acetyl-coenzyme A synthetase from Bradyrhizobium diazoefficiens (strain JCM 10833 / BCRC 13528 / IAM 13628 / NBRC 14792 / USDA 110).